The primary structure comprises 346 residues: Guanine nucleotide-binding protein subunit beta-2 (346 aa).

WD repeat units lie at residues 57-96 (GHIN…KVQI), 99-138 (LRSA…ASGV), 147-185 (GYEG…KTMD), 188-227 (GHAG…HKQM), 230-269 (GHDM…QIAQ), 274-313 (QKNT…HTGT), and 316-346 (GHEN…RLWL).

Belongs to the WD repeat G protein beta family. In terms of assembly, g proteins are composed of 3 units, alpha, beta and gamma. Interacts with Ggamma30A/Guanine nucleotide-binding protein subunit gamma-e. Expressed exclusively in photoreceptor cells in the compound eye (at protein level).

It localises to the cytoplasm. The protein resides in the cell projection. Its subcellular location is the axon. It is found in the rhabdomere. Its function is as follows. Guanine nucleotide-binding proteins (G proteins) are involved as a modulator or transducer in various transmembrane signaling systems. The beta and gamma chains are required for the GTPase activity, for replacement of GDP by GTP, and for G protein-effector interaction. In Drosophila melanogaster (Fruit fly), this protein is Guanine nucleotide-binding protein subunit beta-2 (Gbeta76C).